Here is a 166-residue protein sequence, read N- to C-terminus: MKYTSYILAFQLCVVLGSLGCYCQDPYVKEAENLKKYFNAGDSDVADNGTLFLDILRTWREEGDRKIMQSQIISFYFKLFKNFKDNQSIQKSMETIKEDMNVKFFNSNKRKQDDFERLTNYSVNDLNVQRKAIHELIQVMAELSPAPKIGKRRRSQTLFRGRRASQ.

The N-terminal stretch at 1–23 (MKYTSYILAFQLCVVLGSLGCYC) is a signal peptide. At Gln-24 the chain carries Pyrrolidone carboxylic acid. N-linked (GlcNAc...) asparagine glycosylation is found at Asn-48, Asn-86, and Asn-120.

It belongs to the type II (or gamma) interferon family. Homodimer. Interacts with IFNGR1 (via extracellular domain); this interaction promotes IFNGR1 dimerization. In terms of tissue distribution, released primarily from activated T lymphocytes.

It localises to the secreted. Its function is as follows. Type II interferon produced by immune cells such as T-cells and NK cells that plays crucial roles in antimicrobial, antiviral, and antitumor responses by activating effector immune cells and enhancing antigen presentation. Primarily signals through the JAK-STAT pathway after interaction with its receptor IFNGR1 to affect gene regulation. Upon IFNG binding, IFNGR1 intracellular domain opens out to allow association of downstream signaling components JAK2, JAK1 and STAT1, leading to STAT1 activation, nuclear translocation and transcription of IFNG-regulated genes. Many of the induced genes are transcription factors such as IRF1 that are able to further drive regulation of a next wave of transcription. Plays a role in class I antigen presentation pathway by inducing a replacement of catalytic proteasome subunits with immunoproteasome subunits. In turn, increases the quantity, quality, and repertoire of peptides for class I MHC loading. Increases the efficiency of peptide generation also by inducing the expression of activator PA28 that associates with the proteasome and alters its proteolytic cleavage preference. Up-regulates as well MHC II complexes on the cell surface by promoting expression of several key molecules such as cathepsins B/CTSB, H/CTSH, and L/CTSL. Participates in the regulation of hematopoietic stem cells during development and under homeostatic conditions by affecting their development, quiescence, and differentiation. The protein is Interferon gamma (IFNG) of Callithrix jacchus (White-tufted-ear marmoset).